The chain runs to 296 residues: 4-hydroxybenzoate octaprenyltransferase (296 aa).

8 consecutive transmembrane segments (helical) span residues 28–48 (IGTLLLLWPTYWALWLASDGI), 51–71 (LAVLAAFTIGTFLMRSAGCVI), 102–122 (LLLTAFLCLLAALCLIPLNHL), 143–163 (FFPIPQFYLGFAFSFGIPMAF), 174–194 (AWILFAANVLWTLAYDTVYAM), 212–232 (FGRYDIAAVMLCHGGFTLLMA), 233–253 (VLGAVIGAAWAYWTAIPIVLL), and 274–294 (FLANNRIGWVWFAAIFAHTFF).

Belongs to the UbiA prenyltransferase family. Mg(2+) is required as a cofactor.

It is found in the cell inner membrane. The enzyme catalyses all-trans-octaprenyl diphosphate + 4-hydroxybenzoate = 4-hydroxy-3-(all-trans-octaprenyl)benzoate + diphosphate. Its pathway is cofactor biosynthesis; ubiquinone biosynthesis. Functionally, catalyzes the prenylation of para-hydroxybenzoate (PHB) with an all-trans polyprenyl group. Mediates the second step in the final reaction sequence of ubiquinone-8 (UQ-8) biosynthesis, which is the condensation of the polyisoprenoid side chain with PHB, generating the first membrane-bound Q intermediate 3-octaprenyl-4-hydroxybenzoate. This Neisseria gonorrhoeae (strain ATCC 700825 / FA 1090) protein is 4-hydroxybenzoate octaprenyltransferase.